The sequence spans 372 residues: Cytochrome b (372 aa).

4 helical membrane passes run 25–45 (FGSMLLTCLMLQITTGFFLAI), 69–90 (WIMQNLHAISASMFFICIYIHI), 105–125 (WLSGTALLITLMATAFFGYVL), and 170–190 (FFALHFILPFAIMALSSIHII). Heme b is bound by residues His-75 and His-89. Residues His-174 and His-188 each coordinate heme b. His-193 is an a ubiquinone binding site. 4 consecutive transmembrane segments (helical) span residues 218 to 238 (YKDMLMFTSMITLLFITLSFS), 280 to 300 (LGGALALLMSVMILTTVPFTH), 312 to 332 (LSQILFWTLMATFITITWTAS), and 339 to 358 (FISISQTTSIFYFSFFITIP).

Belongs to the cytochrome b family. The cytochrome bc1 complex contains 3 respiratory subunits (MT-CYB, CYC1 and UQCRFS1), 2 core proteins (UQCRC1 and UQCRC2) and probably 6 low-molecular weight proteins. The cofactor is heme b.

It is found in the mitochondrion inner membrane. Functionally, component of the ubiquinol-cytochrome c reductase complex (complex III or cytochrome b-c1 complex) that is part of the mitochondrial respiratory chain. The b-c1 complex mediates electron transfer from ubiquinol to cytochrome c. Contributes to the generation of a proton gradient across the mitochondrial membrane that is then used for ATP synthesis. The chain is Cytochrome b (MT-CYB) from Naja annulata annulata (Banded water cobra).